A 319-amino-acid polypeptide reads, in one-letter code: HTH-type transcriptional regulator YidZ (319 aa).

The HTH lysR-type domain occupies 8–65; the sequence is LDLNLLLCLQLLMQERSVTKAAKRMNVTPSAVSKSLAKLRAWFDDPLFVNSPLGLSPT. The segment at residues 25 to 44 is a DNA-binding region (H-T-H motif); it reads VTKAAKRMNVTPSAVSKSLA.

Belongs to the LysR transcriptional regulatory family.

Functionally, involved in anaerobic NO protection. The polypeptide is HTH-type transcriptional regulator YidZ (Escherichia coli O17:K52:H18 (strain UMN026 / ExPEC)).